The chain runs to 92 residues: DNA-binding protein HU 1 (92 aa).

Thr-4 carries the phosphothreonine modification.

The protein belongs to the bacterial histone-like protein family. Homodimer. In terms of assembly, (Microbial infection) Interacts with Bacillus phage SP01 Gp46; the interaction replaces dsDNA from the hbs-DNA complex.

Its subcellular location is the cytoplasm. It localises to the nucleoid. In terms of biological role, histone-like DNA-binding protein which introduces negative supercoils in relaxed plasmid DNA in the presence of topoisomerase I. There are at least 20,000 monomers/cell. Capable of wrapping DNA to stabilize it, and thus to prevent its denaturation under extreme environmental conditions. Binds evenly across chromosome, does not display a preference for AT content. Binds ss- and dsDNA in a sequence non-specific manner; 8 nucleotides are sufficient to bind protein. This is DNA-binding protein HU 1 from Bacillus subtilis (strain 168).